Here is a 213-residue protein sequence, read N- to C-terminus: Imidazole glycerol phosphate synthase subunit HisH 2 (213 aa).

A Glutamine amidotransferase type-1 domain is found at 4–211 (RLGLIDYGMG…LNWLETGAKP (208 aa)). Residue Cys-82 is the Nucleophile of the active site. Catalysis depends on residues His-186 and Glu-188.

In terms of assembly, heterodimer of HisH and HisF.

It localises to the cytoplasm. The enzyme catalyses 5-[(5-phospho-1-deoxy-D-ribulos-1-ylimino)methylamino]-1-(5-phospho-beta-D-ribosyl)imidazole-4-carboxamide + L-glutamine = D-erythro-1-(imidazol-4-yl)glycerol 3-phosphate + 5-amino-1-(5-phospho-beta-D-ribosyl)imidazole-4-carboxamide + L-glutamate + H(+). It carries out the reaction L-glutamine + H2O = L-glutamate + NH4(+). It participates in amino-acid biosynthesis; L-histidine biosynthesis; L-histidine from 5-phospho-alpha-D-ribose 1-diphosphate: step 5/9. IGPS catalyzes the conversion of PRFAR and glutamine to IGP, AICAR and glutamate. The HisH subunit provides the glutamine amidotransferase activity that produces the ammonia necessary to HisF for the synthesis of IGP and AICAR. This Prochlorococcus marinus (strain MIT 9313) protein is Imidazole glycerol phosphate synthase subunit HisH 2 (hisH2).